Consider the following 102-residue polypeptide: Redox- and pH-responsive transcriptional regulator WhiB3 (102 aa).

Residues 22–86 (LCRGMDSSMF…GGLSESERDL (65 aa)) enclose the 4Fe-4S Wbl-type domain. Cysteine 23, cysteine 53, cysteine 56, and cysteine 62 together coordinate [4Fe-4S] cluster.

This sequence belongs to the WhiB family. In terms of assembly, homodimer. Interacts with the C-terminal 54 residues of sigma factor SigA (RpoV). [4Fe-4S] cluster is required as a cofactor. The 4Fe-4S cluster interacts with NO, forming a protein-bound dinitrosyliron dithiol complex. In terms of processing, the 4Fe-4S cluster interacts with O(2), leading to its degradation. Cluster loss takes about 2 hours. Once in the apo-form the cysteines oxidize to form 2 intramolecular disulfide bonds.

Its subcellular location is the cytoplasm. A redox-sensitive transcriptional regulator. Maintains intracellular redox homeostasis by regulating catabolic metabolism and polyketide biosynthesis. Regulates expression of the redox buffer ergothioneine (ERG) in a carbon-source-dependent manner; loss of ERG or mycothiol (MSH, the other major redox buffer in this bacteria) leads to respiratory alterations and bioenergetic deficiencies that negatively impact virulence. In response to low external pH (like that found in host macrophage phagosomes) alters endogenous gene expression leading to acid resistance; MSH and WhiB3 are probably part of a regulatory circuit that mediates gene expression upon acid stress. Regulates pathogenic lipid synthesis, coordinating proprionate flux (and other host-derived fatty acid oxidation intermediates) into methyl-branched fatty acids (polyacyltrehalose, phthiocerol dimycocerosates, sulfolipids) and the storage lipid triacylglycerol, functioning as reductive sink. During intracellular growth M.tuberculosis uses host fatty acids as an energy source, generating large quantities of proprionate and NADH/NADPH, which are toxic and highly reducing respectively. WhiB3 is thought to help dissipate proprionate and NADH/NADPH by switching to the in vivo carbon source and via lipid anabolism. Responds to NO and O(2). Regulates expression of genes encoding modular polyketide synthases such as pks2, pks3 and fbpA. The oxidized apo-form of WhiB3 binds DNA (with 2 intramolecular disulfide bonds); holo-WhiB3 (with the 4Fe-4S cluster) binds DNA considerably less well. Discriminates poorly between specific and non-specific DNA-binding. Plays a role in virulence and nutritional stress. In its apo-form can act as a protein disulfide reductase. In terms of biological role, may respond to mycothiol (MSH) redox potential (E-MSH) which decreases at pH 4.5 for up to 72 hours, indicative of cellular reductive stress; deletion of whiB3 leads to a lesser E-MSH at 72 hours, indicative of cellular oxidative stress. Probably via its effects on production of polyketide lipids, regulates host gene expression, leading to blockage of phagosome maturation. Equilibration of extra- and intracytoplasmic pH kills bacteria. In Mycobacterium tuberculosis (strain ATCC 25618 / H37Rv), this protein is Redox- and pH-responsive transcriptional regulator WhiB3 (whiB3).